Consider the following 66-residue polypeptide: MKYTELKDKSIKELEELLHAKKAELFELRVKLKAMQLSNPNEIKKARRNIARINTAINAHYSSSVE.

This sequence belongs to the universal ribosomal protein uL29 family.

The protein is Large ribosomal subunit protein uL29 of Helicobacter pylori (strain HPAG1).